A 150-amino-acid chain; its full sequence is Peptidoglycan-associated lipoprotein (150 aa).

The N-terminal stretch at 1 to 19 (MKKLTKVLLVAGSVAVLAA) is a signal peptide. The N-palmitoyl cysteine moiety is linked to residue Cys20. A lipid anchor (S-diacylglycerol cysteine) is attached at Cys20. In terms of domain architecture, OmpA-like spans 37 to 150 (SVQDLQQRYN…SKNRRAVLAY (114 aa)).

The protein belongs to the Pal lipoprotein family. As to quaternary structure, the Tol-Pal system is composed of five core proteins: the inner membrane proteins TolA, TolQ and TolR, the periplasmic protein TolB and the outer membrane protein Pal. They form a network linking the inner and outer membranes and the peptidoglycan layer.

The protein resides in the cell outer membrane. Functionally, part of the Tol-Pal system, which plays a role in outer membrane invagination during cell division and is important for maintaining outer membrane integrity. The sequence is that of Peptidoglycan-associated lipoprotein from Pasteurella multocida (strain Pm70).